Consider the following 195-residue polypeptide: MQNRIAKIERNTSETKVKIDINLDGTGLNKIHTGIGFLDHMLELFSFHSNTDVYLSCDGDLNVCDHHSVEDVGIIFGKAFKEALGDKKGINRYGTFFLPMDEVLSLISLDISGRGFLVFDCEFTREKVGELSTEMIEEFFRAFALNSEITLHCKVLYGKNDHHKIESLFKGFGRALRDAKERNELNKVPSTKGIL.

The protein belongs to the imidazoleglycerol-phosphate dehydratase family.

The protein resides in the cytoplasm. The enzyme catalyses D-erythro-1-(imidazol-4-yl)glycerol 3-phosphate = 3-(imidazol-4-yl)-2-oxopropyl phosphate + H2O. It functions in the pathway amino-acid biosynthesis; L-histidine biosynthesis; L-histidine from 5-phospho-alpha-D-ribose 1-diphosphate: step 6/9. In Clostridium botulinum (strain Alaska E43 / Type E3), this protein is Imidazoleglycerol-phosphate dehydratase.